The following is a 491-amino-acid chain: UDP-N-acetylmuramate--L-alanine ligase (491 aa).

126-132 (GTHGKTT) lines the ATP pocket.

The protein belongs to the MurCDEF family.

The protein resides in the cytoplasm. The enzyme catalyses UDP-N-acetyl-alpha-D-muramate + L-alanine + ATP = UDP-N-acetyl-alpha-D-muramoyl-L-alanine + ADP + phosphate + H(+). Its pathway is cell wall biogenesis; peptidoglycan biosynthesis. Cell wall formation. The sequence is that of UDP-N-acetylmuramate--L-alanine ligase from Klebsiella pneumoniae subsp. pneumoniae (strain ATCC 700721 / MGH 78578).